The following is a 436-amino-acid chain: Glutamyl-tRNA reductase 2 (436 aa).

Residues 49 to 52, S106, 111 to 113, and Q117 each bind substrate; these read TCNR and EPQ. Residue C50 is the Nucleophile of the active site. 186-191 lines the NADP(+) pocket; sequence GAGKMC.

Belongs to the glutamyl-tRNA reductase family. Homodimer.

The catalysed reaction is (S)-4-amino-5-oxopentanoate + tRNA(Glu) + NADP(+) = L-glutamyl-tRNA(Glu) + NADPH + H(+). The protein operates within porphyrin-containing compound metabolism; protoporphyrin-IX biosynthesis; 5-aminolevulinate from L-glutamyl-tRNA(Glu): step 1/2. In terms of biological role, catalyzes the NADPH-dependent reduction of glutamyl-tRNA(Glu) to glutamate 1-semialdehyde (GSA). The sequence is that of Glutamyl-tRNA reductase 2 from Koribacter versatilis (strain Ellin345).